The sequence spans 273 residues: Hydroxynaphthalene reductase arp2 (273 aa).

4 residues coordinate NADP(+): Ile-24, Asp-70, Asn-97, and Arg-130. Active-site proton donor residues include Ser-146 and Ser-147. Residues Tyr-160, Lys-164, Val-193, and Ser-195 each coordinate NADP(+). Tyr-160 serves as the catalytic Proton acceptor. The Lowers pKa of active site Tyr role is filled by Lys-164.

The protein belongs to the short-chain dehydrogenases/reductases (SDR) family.

It localises to the endosome. The protein operates within pigment biosynthesis; melanin biosynthesis. Its activity is regulated as follows. Tricyclazole and pyroquilon inhibit arp2 hydroxynaphtalene reductase activity. Functionally, hydroxynaphthalene reductase; part of the gene cluster that mediates the biosynthesis of dihydroxynaphthalene (DHN)-melanin, a bluish-green pigment and a structural component of the conidial wall. The first step of the pathway is the production of the heptaketide naphtopyrone YWA1 by the polyketide synthase alb1 though condensation of acetyl-CoA with malonyl-CoA. The naphtopyrone YWA1 is then converted to the pentaketide 1,3,6,8-tetrahydroxynaphthalene (1,3,6,8-THN) by the heptaketide hydrolyase ayg1 though chain-length shortening. 1,3,6,8-THN is substrate of the hydroxynaphthalene reductase arp2 to yield scytalone. The scytalone dehydratase arp1 then reduces scytalone to 1,3,8-THN. 1,3,8-THN is also substrate of the hydroxynaphthalene reductase arp2 to yield vermelone. Vermelone is further converted by the multicopper oxidase abr1 to 1,8-DHN. Finally the laccase abr2 transforms 1,8-DHN to DHN-melanin. DHN-melanin biosynthesis appears to be initiated in endosomes where early enzymes (abl1, ayg1, arp1 and arp2) localize, with exocytosis leading to melanin deposition on the cell surface where late enzymes (abr1 and abr2) localize. DHN-melanin is an important structural component of the outer cell wall and is required for the presence of conidial surface hydrophobins. DHN-melanin also plays a crucial role in fungal virulence, including a protective role against the host's immune defenses. DHN-melanin also protects conidia against amoeba predation. The protein is Hydroxynaphthalene reductase arp2 of Aspergillus fumigatus (strain ATCC MYA-4609 / CBS 101355 / FGSC A1100 / Af293) (Neosartorya fumigata).